The sequence spans 338 residues: 2-oxoglutarate-dependent dioxygenase ecdG (338 aa).

One can recognise a Fe2OG dioxygenase domain in the interval 165–273; the sequence is PSVTNLGFLR…KYTLAYFVRP (109 aa). Residues H190, D192, and H249 each coordinate Fe cation. A 2-oxoglutarate-binding site is contributed by K264.

This sequence belongs to the iron/ascorbate-dependent oxidoreductase family. Fe(2+) serves as cofactor.

Its pathway is antifungal biosynthesis. Its function is as follows. 2-oxoglutarate-dependent dioxygenase; part of the gene cluster that mediates the biosynthesis of echinocandin B, a fungal lipidated cyclic hexapeptide that acts as an antifungal agent. Linoleoyl-AMP, produced by the fatty-acyl-AMP ligase ecdI, is transferred to the initiation carrier domain (T0) of ecdA. The linoleoyl-S-phosphopantetheinyl-T0 is sequentially extended with L-ornithine, L-threonine, L-proline, L-homotyrosine, L-threonine, and 4R-methyl-L-proline to form the linear hexapeptide. Thereafter, the terminal condensation (C7) performs macrocyclization of the NRPS product and the cyclic scaffold is released from ecdA. All six of the amino acid residues are hydroxylated, including 4R,5R-dihydroxy-L-ornithine, 4R-hydroxyl-L-proline, 3S,4S-dihydroxy-L-homotyrosine, and 3S-hydroxyl-4S-methyl-L-prolin. In the pathway, all the hydroxylation reactions are proposed to occur following completion of the cyclic peptide, so the unhydroxylated precursor produced by ecdA will undergo six rounds of hydroxylation. Five hydroxylase genes (ecdG, ecdH, ecdK, htyE and htyF) are embedded within the echinocandin B (ecd) and L-homotyrosine (hty) clusters. This is 2-oxoglutarate-dependent dioxygenase ecdG from Aspergillus rugulosus (Emericella rugulosa).